The chain runs to 300 residues: Cation-efflux pump FieF (300 aa).

The helical transmembrane segment at 24–44 (LLIKIFAWWYTGSVSILAALV) threads the bilayer. Residues aspartate 45 and aspartate 49 each coordinate Zn(2+). 2 helical membrane passes run 82-102 (AALA…LTGI) and 114-134 (AGVG…LVTF). The Zn(2+) site is built by histidine 153 and aspartate 157. The next 2 helical transmembrane spans lie at 156-176 (SDVM…YGWH) and 178-198 (ADAL…LRMG).

This sequence belongs to the cation diffusion facilitator (CDF) transporter (TC 2.A.4) family. FieF subfamily. Homodimer.

The protein localises to the cell inner membrane. It carries out the reaction Zn(2+)(in) + H(+)(out) = Zn(2+)(out) + H(+)(in). It catalyses the reaction Cd(2+)(in) + H(+)(out) = Cd(2+)(out) + H(+)(in). The enzyme catalyses Fe(2+)(in) + H(+)(out) = Fe(2+)(out) + H(+)(in). Divalent metal cation transporter which exports Zn(2+), Cd(2+) and possibly Fe(2+). May be involved in zinc and iron detoxification by efflux. This is Cation-efflux pump FieF from Klebsiella pneumoniae (strain 342).